A 303-amino-acid polypeptide reads, in one-letter code: Regulatory protein PocR (303 aa).

The HTH araC/xylS-type domain maps to 195-293; the sequence is KKALRYIDAH…QVTPQAYRQQ (99 aa). DNA-binding regions (H-T-H motif) lie at residues 212–233 and 260–283; these read EDVA…KKYQ and IASI…RQTY.

The protein operates within cofactor biosynthesis; adenosylcobalamin biosynthesis [regulation]. Its pathway is polyol metabolism; 1,2-propanediol degradation [regulation]. In terms of biological role, positive regulatory protein of pdu and cob operons. Positively autoregulates its own expression. The chain is Regulatory protein PocR (pocR) from Salmonella typhimurium (strain LT2 / SGSC1412 / ATCC 700720).